The sequence spans 517 residues: ATP synthase subunit beta (517 aa).

Composition is skewed to low complexity over residues 1-22 and 29-42; these read MAKA…AAKA and AKTA…APKA. Residues 1–42 form a disordered region; sequence MAKAATPKTTAAAEAKPAAAKAPAKKAPAKTAAAKSDAAPKA. 195 to 202 serves as a coordination point for ATP; the sequence is GGAGVGKT.

Belongs to the ATPase alpha/beta chains family. As to quaternary structure, F-type ATPases have 2 components, CF(1) - the catalytic core - and CF(0) - the membrane proton channel. CF(1) has five subunits: alpha(3), beta(3), gamma(1), delta(1), epsilon(1). CF(0) has three main subunits: a(1), b(2) and c(9-12). The alpha and beta chains form an alternating ring which encloses part of the gamma chain. CF(1) is attached to CF(0) by a central stalk formed by the gamma and epsilon chains, while a peripheral stalk is formed by the delta and b chains.

Its subcellular location is the cell inner membrane. The enzyme catalyses ATP + H2O + 4 H(+)(in) = ADP + phosphate + 5 H(+)(out). In terms of biological role, produces ATP from ADP in the presence of a proton gradient across the membrane. The catalytic sites are hosted primarily by the beta subunits. In Brucella anthropi (strain ATCC 49188 / DSM 6882 / CCUG 24695 / JCM 21032 / LMG 3331 / NBRC 15819 / NCTC 12168 / Alc 37) (Ochrobactrum anthropi), this protein is ATP synthase subunit beta.